The sequence spans 185 residues: MVKIVFSGPPGSGKTTQAKRVAEYYGLKYFSAGSLFREYARRKGVSLEELSRIALEDPSIDLEIDRMTLETVRDSDDIVIDGHLAAWIVSDIVDLKIYVTAPLTLRILRVAGRDNTPLGKALAETLIREYSQRRRFMEYYGIDIYDTSIFDLTINTKLIGVEEAFNIIKSIIDKILKEKHGSMSE.

8-16 (GPPGSGKTT) lines the ATP pocket.

Belongs to the cytidylate kinase family. Type 2 subfamily.

The protein localises to the cytoplasm. It carries out the reaction CMP + ATP = CDP + ADP. The enzyme catalyses dCMP + ATP = dCDP + ADP. This is Cytidylate kinase from Desulfurococcus amylolyticus (strain DSM 18924 / JCM 16383 / VKM B-2413 / 1221n) (Desulfurococcus kamchatkensis).